The primary structure comprises 164 residues: Arginine repressor (164 aa).

Belongs to the ArgR family.

The protein resides in the cytoplasm. Its pathway is amino-acid biosynthesis; L-arginine biosynthesis [regulation]. Regulates arginine biosynthesis genes. The sequence is that of Arginine repressor from Mycobacterium avium (strain 104).